A 1511-amino-acid chain; its full sequence is Pleiotropic ABC efflux transporter of multiple drugs (1511 aa).

The span at 1–14 (MPEAKLNNNVNDVT) shows a compositional bias: polar residues. The interval 1 to 32 (MPEAKLNNNVNDVTSYSSASSSTENAADLHNY) is disordered. Over 1–517 (MPEAKLNNNV…LLIRNMWRLR (517 aa)) the chain is Cytoplasmic. Residue Ser-22 is modified to Phosphoserine. Phosphothreonine is present on residues Thr-49 and Thr-51. The segment at 52–71 (AQSMQNSTQSAPNKSDAQSI) is disordered. A phosphoserine mark is found at Ser-54, Ser-58, and Ser-61. Residues 161-410 (LRKFQRSKET…FEDMGYVCPS (250 aa)) form the ABC transporter 1 domain. A helical membrane pass occupies residues 518–542 (NNIGFTLFMILGNCSMALILGSMFF). Over 543-558 (KIMKKGDTSTFYFRGS) the chain is Extracellular. The helical transmembrane segment at 559–579 (AMFFAILFNAFSSLLEIFSLY) threads the bilayer. The Cytoplasmic segment spans residues 580-611 (EARPITEKHRTYSLYHPSADAFASVLSEIPSK). Residues 612–628 (LIIAVCFNIIFYFLVDF) traverse the membrane as a helical segment. Over 629-631 (RRN) the chain is Extracellular. A helical transmembrane segment spans residues 632-650 (GGVFFFYLLINIVAVFSMS). At 651 to 665 (HLFRCVGSLTKTLSE) the chain is on the cytoplasmic side. A helical transmembrane segment spans residues 666 to 685 (AMVPASMLLLALSMYTGFAI). Residues 686-774 (PKKKILRWSK…QYYHKDKWRG (89 aa)) are Extracellular-facing. Asn-734 carries N-linked (GlcNAc...) asparagine glycosylation. Residues 775 to 793 (FGIGMAYVVFFFFVYLFLC) traverse the membrane as a helical segment. The Cytoplasmic portion of the chain corresponds to 794-1237 (EYNEGAKQKG…GTSLQGLQNQ (444 aa)). The interval 824–858 (EKNANDPENVGERSDLSSDRKMLQESSEEESDTYG) is disordered. Lys-825 participates in a covalent cross-link: Glycyl lysine isopeptide (Lys-Gly) (interchain with G-Cter in ubiquitin). Over residues 833–846 (VGERSDLSSDRKML) the composition is skewed to basic and acidic residues. 6 positions are modified to phosphoserine: Ser-837, Ser-840, Ser-841, Ser-849, Ser-850, and Ser-854. Residues 869–1112 (FHWRNLCYEV…MIDYFESHGA (244 aa)) enclose the ABC transporter 2 domain. ATP is bound at residue 905–912 (GASGAGKT). The helical transmembrane segment at 1238–1260 (MLAVFMFTVIFNPILQQYLPSFV) threads the bilayer. The Extracellular segment spans residues 1261–1291 (QQRDLYEARERPSRTFSWISFIFAQIFVEVP). Residues 1292-1313 (WNILAGTIAYFIYYYPIGFYSN) form a helical membrane-spanning segment. The Cytoplasmic segment spans residues 1314–1324 (ASAAGQLHERG). A helical transmembrane segment spans residues 1325-1349 (ALFWLFSCAFYVYVGSMGLLVISFN). At 1350 to 1354 (QVAES) the chain is on the extracellular side. A helical transmembrane segment spans residues 1355-1379 (AANLASLLFTMSLSFCGVMTTPSAM). The Cytoplasmic portion of the chain corresponds to 1380-1388 (PRFWIFMYR). Residues 1389-1407 (VSPLTYFIQALLAVGVANV) traverse the membrane as a helical segment. Over 1408–1476 (DVKCADYELL…VNSFYSERWR (69 aa)) the chain is Extracellular. Asn-1447 is a glycosylation site (N-linked (GlcNAc...) asparagine). Residues 1477-1499 (NYGIFICYIAFNYIAGVFFYWLA) form a helical membrane-spanning segment. Residues 1500–1511 (RVPKKNGKLSKK) lie on the Cytoplasmic side of the membrane.

The protein belongs to the ABC transporter superfamily. ABCG family. PDR (TC 3.A.1.205) subfamily. Ubiquitinylation mediates endocytosis and vacuolar degradation. Phosphorylation by casein kinase I stabilizes the protein half-life.

Its subcellular location is the cell membrane. FK506, isonitrile, enniatin, RU49953, kitasatospora E420, staurosporine CGP42700, prenyl-flavonoids, D-octapeptides were found to be inhibitors in vivo. Vanadate and oligomycin were found to be inhibitors in vitro. Functionally, active efflux of weakly charged organic compounds of 90 cubic Angstroms to 300 cubic Angstroms surface volume. Confers resistance to numerous chemicals including cycloheximide, sulfomethuron methyl, steroids, antiseptics, antibiotics, anticancer, herbicides, mycotoxins, insecticides, ionophores, alkaloids, flavonoids, phenothiazines, organotin compounds, carbazoles, lysosomotropic aminoesters, detergents, rhodamines and other fluorophores, azoles and other antifungals. Exhibits nucleoside triphosphatase activity. The sequence is that of Pleiotropic ABC efflux transporter of multiple drugs (PDR5) from Saccharomyces cerevisiae (strain ATCC 204508 / S288c) (Baker's yeast).